A 132-amino-acid polypeptide reads, in one-letter code: uncharacterized protein (132 aa).

This sequence to M.jannaschii MJ0661.

This is an uncharacterized protein from Helicobacter pylori (strain J99 / ATCC 700824) (Campylobacter pylori J99).